The following is a 241-amino-acid chain: 1-(5-phosphoribosyl)-5-[(5-phosphoribosylamino)methylideneamino] imidazole-4-carboxamide isomerase (241 aa).

Catalysis depends on Asp-10, which acts as the Proton acceptor. The Proton donor role is filled by Asp-131.

This sequence belongs to the HisA/HisF family.

The protein localises to the cytoplasm. The enzyme catalyses 1-(5-phospho-beta-D-ribosyl)-5-[(5-phospho-beta-D-ribosylamino)methylideneamino]imidazole-4-carboxamide = 5-[(5-phospho-1-deoxy-D-ribulos-1-ylimino)methylamino]-1-(5-phospho-beta-D-ribosyl)imidazole-4-carboxamide. Its pathway is amino-acid biosynthesis; L-histidine biosynthesis; L-histidine from 5-phospho-alpha-D-ribose 1-diphosphate: step 4/9. The chain is 1-(5-phosphoribosyl)-5-[(5-phosphoribosylamino)methylideneamino] imidazole-4-carboxamide isomerase from Bifidobacterium longum subsp. infantis (strain ATCC 15697 / DSM 20088 / JCM 1222 / NCTC 11817 / S12).